Reading from the N-terminus, the 292-residue chain is Protein SETSIP (292 aa).

Residues 1–11 show a composition bias toward low complexity; the sequence is MAPKRQSPLPL. 2 disordered regions span residues 1–43 and 158–292; these read MAPK…EQQE and LNES…GEDD. Positions 35–78 form a coiled coil; sequence KKGEKEQQEAIEHIDEVQNEIDRLNEQDSEEILKVEQKYNKLRQ. Residues 237-292 are compositionally biased toward acidic residues; that stretch reads DMDDEEGGEDDDDDDDDGDEGEEELEDIDEGDEDEGEEDEDDDEGEEGEEDEGEDD.

This sequence belongs to the nucleosome assembly protein (NAP) family. As to expression, expressed in endothelial cell (EC) and protein-induced pluripotent stem (PiPS) endothelial cell (EC) (at protein level).

It localises to the cytoplasm. The protein localises to the nucleus. Its function is as follows. Plays a role as a transcriptional activator involved in the early stage of somatic cell reprogramming. Promotes the differentiation of protein-induced pluripotent stem (PiPS) cells into endothelial cells and the formation of vascular-like tubes (in vitro). Involved in the transcription induction of vascular endothelial-cadherin (VE-cadherin) expression. Associates to the VE-cadherin gene promoter. The polypeptide is Protein SETSIP (SETSIP) (Homo sapiens (Human)).